Consider the following 585-residue polypeptide: Bifunctional purine biosynthesis protein ade10 (585 aa).

The region spanning 1–142 (MYALLSVYDK…KNHARVTILS (142 aa)) is the MGS-like domain. IMP is bound by residues 30–33 (SGGT), 60–63 (RVKT), 97–98 (CN), and 121–122 (DI). The active-site Proton donor/acceptor; for FAICAR cyclization activity is the Lys133. Residues 200–201 (RY), His260, Gly308, Asp331, Asn423, and Arg443 contribute to the 5-amino-1-(5-phospho-beta-D-ribosyl)imidazole-4-carboxamide site. The active-site Proton acceptor; for AICAR formyltransferase activity is the His260. Position 444 (Ile444) interacts with (6R)-10-formyltetrahydrofolate. 5-amino-1-(5-phospho-beta-D-ribosyl)imidazole-4-carboxamide is bound at residue Phe534. Residues Asp539 and 558–559 (SV) contribute to the (6R)-10-formyltetrahydrofolate site. Position 581 (Arg581) interacts with 5-amino-1-(5-phospho-beta-D-ribosyl)imidazole-4-carboxamide.

It belongs to the PurH family. As to quaternary structure, homodimer.

It localises to the cytoplasm. The protein localises to the cytosol. The enzyme catalyses (6R)-10-formyltetrahydrofolate + 5-amino-1-(5-phospho-beta-D-ribosyl)imidazole-4-carboxamide = 5-formamido-1-(5-phospho-D-ribosyl)imidazole-4-carboxamide + (6S)-5,6,7,8-tetrahydrofolate. It carries out the reaction IMP + H2O = 5-formamido-1-(5-phospho-D-ribosyl)imidazole-4-carboxamide. It functions in the pathway purine metabolism; IMP biosynthesis via de novo pathway; 5-formamido-1-(5-phospho-D-ribosyl)imidazole-4-carboxamide from 5-amino-1-(5-phospho-D-ribosyl)imidazole-4-carboxamide (10-formyl THF route): step 1/1. The protein operates within purine metabolism; IMP biosynthesis via de novo pathway; IMP from 5-formamido-1-(5-phospho-D-ribosyl)imidazole-4-carboxamide: step 1/1. Bifunctional enzyme that catalyzes the last two steps of purine biosynthesis. Acts as a transformylase that incorporates a formyl group to the AMP analog AICAR (5-amino-1-(5-phospho-beta-D-ribosyl)imidazole-4-carboxamide) to produce the intermediate formyl-AICAR (FAICAR). Also catalyzes the cyclization of FAICAR to IMP. This is Bifunctional purine biosynthesis protein ade10 (ade10) from Schizosaccharomyces pombe (strain 972 / ATCC 24843) (Fission yeast).